Reading from the N-terminus, the 250-residue chain is MAVPTVTMQSLLDVGAHFGHQTHRWNPKMKPYIFGDRNGIHIMDLSQTVPLFTRALDFISQTVAHGGKVLFVGTKRQAQEPIADAARRSGQFFVNHRWLGGMLTNWRTISGSIKRLKSLEEKLSGDTAGFTKKEILQLTRERDKLELSLGGIRDMGTIPDIMFVVDANKEELAIKEANTLGIPVVAILDSNVSPDGIAFPIPANDDAARAVRYYCDAIAEAATRGDQQNRQELGEDLGAAVEPAAEEALA.

The segment at D226 to A250 is disordered. Residues A239–A250 are compositionally biased toward low complexity.

It belongs to the universal ribosomal protein uS2 family.

The polypeptide is Small ribosomal subunit protein uS2 (rpsB) (Zymomonas mobilis subsp. mobilis (strain ATCC 31821 / ZM4 / CP4)).